Reading from the N-terminus, the 304-residue chain is UDP-N-acetylenolpyruvoylglucosamine reductase (304 aa).

In terms of domain architecture, FAD-binding PCMH-type spans 33–198 (IGGPADLLVM…LEVVLALQEG (166 aa)). The active site involves Arg177. Ser227 serves as the catalytic Proton donor. The active site involves Glu297.

The protein belongs to the MurB family. FAD is required as a cofactor.

Its subcellular location is the cytoplasm. It carries out the reaction UDP-N-acetyl-alpha-D-muramate + NADP(+) = UDP-N-acetyl-3-O-(1-carboxyvinyl)-alpha-D-glucosamine + NADPH + H(+). Its pathway is cell wall biogenesis; peptidoglycan biosynthesis. In terms of biological role, cell wall formation. The chain is UDP-N-acetylenolpyruvoylglucosamine reductase from Alkaliphilus metalliredigens (strain QYMF).